A 272-amino-acid polypeptide reads, in one-letter code: Cyanophycinase (272 aa).

Catalysis depends on charge relay system residues S132, E150, and H174.

The protein belongs to the peptidase S51 family.

The enzyme catalyses [L-4-(L-arginin-2-N-yl)aspartate](n) + H2O = [L-4-(L-arginin-2-N-yl)aspartate](n-1) + L-4-(L-arginin-2-N-yl)aspartate. In terms of biological role, exopeptidase that catalyzes the hydrolytic cleavage of multi-L-arginyl-poly-L-aspartic acid (cyanophycin; a water-insoluble reserve polymer) into aspartate-arginine dipeptides. This is Cyanophycinase (cphB) from Geminocystis herdmanii (strain PCC 6308) (Synechocystis sp. (strain PCC 6308)).